Reading from the N-terminus, the 180-residue chain is Putative phycocyanobilin lyase CpcS 2 (180 aa).

It belongs to the CpcS/CpeS biliprotein lyase family.

In terms of biological role, covalently attaches a chromophore to Cys residue(s) of phycobiliproteins (Potential). In vitro does not act as a chromophore lyase for ApcA1, ApcA2, ApcB, ApcD, ApcF, CpcB or PecB, the lyase activity is therefore unsure. In Nostoc sp. (strain PCC 7120 / SAG 25.82 / UTEX 2576), this protein is Putative phycocyanobilin lyase CpcS 2 (cpeS2).